The sequence spans 270 residues: Release factor glutamine methyltransferase (270 aa).

Residues 112–116 (GTGSG), Asp135, Trp162, and Asn178 contribute to the S-adenosyl-L-methionine site. Residue 178–181 (NPPY) coordinates substrate.

It belongs to the protein N5-glutamine methyltransferase family. PrmC subfamily.

It catalyses the reaction L-glutaminyl-[peptide chain release factor] + S-adenosyl-L-methionine = N(5)-methyl-L-glutaminyl-[peptide chain release factor] + S-adenosyl-L-homocysteine + H(+). In terms of biological role, methylates the class 1 translation termination release factors RF1/PrfA and RF2/PrfB on the glutamine residue of the universally conserved GGQ motif. The sequence is that of Release factor glutamine methyltransferase from Bordetella pertussis (strain Tohama I / ATCC BAA-589 / NCTC 13251).